Reading from the N-terminus, the 842-residue chain is Oligopeptide transporter phomP2' (842 aa).

Residues 1-58 (MEADPKVPFTDEMNIQDEHNWESGSWSSSRRSNDSNVTLLSRRSSVEQHEDERQKDSD) form a disordered region. Over residues 23–36 (SGSWSSSRRSNDSN) the composition is skewed to low complexity. N-linked (GlcNAc...) asparagine glycans are attached at residues N33 and N36. Positions 44–58 (SSVEQHEDERQKDSD) are enriched in basic and acidic residues. A run of 6 helical transmembrane segments spans residues 105 to 125 (VWLLSTFWVLAGCSISTVYYF), 177 to 197 (ALVVIAYWGSSYTAYGLGPLS), 210 to 230 (PWAITFLVTTQLTGYGLVGLY), 268 to 288 (VFMAIASAAFVYQWLPSFVFP), 315 to 335 (GFGLMDFSLDWNYVAFLSPLF), and 345 to 365 (FVGAALAVWITYPVAYFSDAL). 2 N-linked (GlcNAc...) asparagine glycosylation sites follow: N386 and N398. 4 helical membrane-spanning segments follow: residues 415 to 435 (AMHFFWGFASASAIVTYAVLF), 478 to 498 (AWYALLLAVCLCLGTIQLYAG), 505 to 525 (WGLQLVVAISALFTLPCGMLF), and 585 to 605 (WELLVAQVYGTLLGPFVNWAV). A compositionally biased stretch (gly residues) spans 629-649 (QGLGLGQGGGGGGGGGGGGGQ). The interval 629–657 (QGLGLGQGGGGGGGGGGGGGQQQRAAGAH) is disordered. Helical transmembrane passes span 668 to 688 (NFFSSSVIWGVMGPARVFGGG), 700 to 720 (WLLPSGFAVGAAAVLLLWLIH), and 731 to 751 (WPLHPAIIFHGASLFPVFPTT). N-linked (GlcNAc...) asparagine glycosylation is present at N752. Residues 784-804 (AGLDCGAQLVQMVLGLAFLVF) traverse the membrane as a helical segment.

This sequence belongs to the oligopeptide OPT transporter family.

It is found in the membrane. Oligopeptide transporter; part of the gene cluster that mediates the biosynthesis of the phomopsins, a group of hexapeptide mycotoxins which infects lupins and causes lupinosis disease in livestock. This is Oligopeptide transporter phomP2' from Diaporthe leptostromiformis (Lupinosis disease fungus).